The chain runs to 227 residues: Ribose-5-phosphate isomerase A (227 aa).

Substrate-binding positions include 30-33, 86-89, and 99-102; these read TGST, DGAD, and KGMG. Residue glutamate 108 is the Proton acceptor of the active site. Lysine 126 contributes to the substrate binding site.

It belongs to the ribose 5-phosphate isomerase family. As to quaternary structure, homodimer.

The enzyme catalyses aldehydo-D-ribose 5-phosphate = D-ribulose 5-phosphate. It participates in carbohydrate degradation; pentose phosphate pathway; D-ribose 5-phosphate from D-ribulose 5-phosphate (non-oxidative stage): step 1/1. Catalyzes the reversible conversion of ribose-5-phosphate to ribulose 5-phosphate. This Thermus thermophilus (strain ATCC 27634 / DSM 579 / HB8) protein is Ribose-5-phosphate isomerase A.